The chain runs to 227 residues: UPF0441 protein YPO0661/y3517/YP_2976 (227 aa).

Residues 198–227 (GGFGESVAKQSSMQRSAATSSKTTTRSMGG) are disordered. Over residues 212 to 227 (RSAATSSKTTTRSMGG) the composition is skewed to low complexity.

It belongs to the UPF0441 family.

This chain is UPF0441 protein YPO0661/y3517/YP_2976, found in Yersinia pestis.